Consider the following 309-residue polypeptide: Olfactory receptor 6C4 (309 aa).

The Extracellular segment spans residues 1–23 (MKNRTMFGEFILLGLTNQPELQV). N-linked (GlcNAc...) asparagine glycosylation occurs at N3. A helical transmembrane segment spans residues 24-44 (MIFIFLFLTYMLSILGNLTII). The Cytoplasmic segment spans residues 45 to 52 (TLTLLDPH). The helical transmembrane segment at 53–73 (LQTPMYFFLRNFSFLEISFTS) threads the bilayer. The Extracellular portion of the chain corresponds to 74–97 (IFIPRFLTSMTTGNKVISFAGCLT). Cysteines 95 and 187 form a disulfide. The helical transmembrane segment at 98–118 (QYFFAIFLGATEFYLLASMSY) threads the bilayer. Residues 119-137 (DRYVAICKPLHYLTIMSSR) lie on the Cytoplasmic side of the membrane. A helical membrane pass occupies residues 138 to 158 (VCIQLVFCSWLGGFLAILPPI). The Extracellular portion of the chain corresponds to 159–195 (ILMTQVDFCVSNILNHYYCDYGPLVELACSDTSLLEL). A helical membrane pass occupies residues 196 to 215 (MVILLAVVTLMVTLVLVTLS). The Cytoplasmic segment spans residues 216–235 (YTYIIRTILRIPSAQQRTKA). Residues 236–256 (FSTCSSHMIVISLSYGSCMFM) form a helical membrane-spanning segment. The Extracellular segment spans residues 257–269 (YINPSAKEGGAFN). A helical membrane pass occupies residues 270-290 (KGIAVLITSVTPLLNPFIYTL). Residues 291 to 309 (RNQQVKQAFKDSVKKIVKL) are Cytoplasmic-facing.

Belongs to the G-protein coupled receptor 1 family.

The protein localises to the cell membrane. In terms of biological role, odorant receptor. The sequence is that of Olfactory receptor 6C4 (OR6C4) from Homo sapiens (Human).